The chain runs to 446 residues: Histidine--tRNA ligase (446 aa).

It belongs to the class-II aminoacyl-tRNA synthetase family. Homodimer.

The protein resides in the cytoplasm. The catalysed reaction is tRNA(His) + L-histidine + ATP = L-histidyl-tRNA(His) + AMP + diphosphate + H(+). In Burkholderia ambifaria (strain MC40-6), this protein is Histidine--tRNA ligase.